A 30-amino-acid polypeptide reads, in one-letter code: Proteinase inhibitor CeKI (30 aa).

This sequence belongs to the protease inhibitor I3 (leguminous Kunitz-type inhibitor) family.

In terms of biological role, potent inhibitor of serine proteases plasma kallikrein, plasmin and coagulation factor XIIa. Weak inhibitor of serine proteases trypsin and coagulation factor Xa. Does not inhibit the serine proteases chymotrypsin, elastase or thrombin. Inhibits kinin release from HMW-kininogen by kallikrein in vitro. This is Proteinase inhibitor CeKI from Paubrasilia echinata (Pau Brasil).